Reading from the N-terminus, the 369-residue chain is Transmembrane protein 144 homolog A (369 aa).

A run of 10 helical transmembrane segments spans residues 6-26 (VIGY…YVPV), 35-55 (LSYA…AMMI), 63-83 (PIGI…IPII), 85-105 (LVGL…VGFF), 122-142 (DWMN…FFFI), 221-241 (VAGI…MIPM), 256-276 (IIFS…MFYA), 288-308 (TVFP…GLMI), 318-338 (GYPI…VFYF), and 347-367 (LLIL…LAFS).

The protein belongs to the TMEM144 family.

The protein resides in the membrane. The polypeptide is Transmembrane protein 144 homolog A (tmem144A) (Dictyostelium discoideum (Social amoeba)).